The following is a 186-amino-acid chain: MDKNSRYTVDSSILFRQWLNDTREMVQDTIFHSRIQKKNNNHPVSQRVFFEQNAHSHYFSYRNNKNLFKENPVSYIRHQSLYNVLKNLKKGRYNPDISIDLHGLTQHQAQQALGELITTCQKEKIFCAHIMHGHGKHILKKQTPFWLSQHPDIIAFHEAPKFFGSDAAIIVIIEINSLKKNINIFN.

The Smr domain occupies 99–174 (IDLHGLTQHQ…SDAAIIVIIE (76 aa)).

This sequence belongs to the SmrB family. As to quaternary structure, associates with collided ribosomes, but not with correctly translating polysomes.

Its function is as follows. Acts as a ribosome collision sensor. Detects stalled/collided disomes (pairs of ribosomes where the leading ribosome is stalled and a second ribosome has collided with it) and endonucleolytically cleaves mRNA at the 5' boundary of the stalled ribosome. Stalled/collided disomes form a new interface (primarily via the 30S subunits) that binds SmrB. Cleaved mRNA becomes available for tmRNA ligation, leading to ribosomal subunit dissociation and rescue of stalled ribosomes. The protein is Ribosome rescue factor SmrB of Buchnera aphidicola subsp. Acyrthosiphon pisum (strain 5A).